We begin with the raw amino-acid sequence, 376 residues long: Succinyl-diaminopimelate desuccinylase (376 aa).

Residue His-66 coordinates Zn(2+). Asp-68 is an active-site residue. Residue Asp-99 coordinates Zn(2+). Residue Glu-133 is the Proton acceptor of the active site. Glu-134, Glu-162, and His-349 together coordinate Zn(2+).

This sequence belongs to the peptidase M20A family. DapE subfamily. In terms of assembly, homodimer. Zn(2+) serves as cofactor. The cofactor is Co(2+).

The catalysed reaction is N-succinyl-(2S,6S)-2,6-diaminopimelate + H2O = (2S,6S)-2,6-diaminopimelate + succinate. It functions in the pathway amino-acid biosynthesis; L-lysine biosynthesis via DAP pathway; LL-2,6-diaminopimelate from (S)-tetrahydrodipicolinate (succinylase route): step 3/3. Its function is as follows. Catalyzes the hydrolysis of N-succinyl-L,L-diaminopimelic acid (SDAP), forming succinate and LL-2,6-diaminopimelate (DAP), an intermediate involved in the bacterial biosynthesis of lysine and meso-diaminopimelic acid, an essential component of bacterial cell walls. The sequence is that of Succinyl-diaminopimelate desuccinylase from Vesicomyosocius okutanii subsp. Calyptogena okutanii (strain HA).